The sequence spans 371 residues: MSL complex subunit 3B (371 aa).

Disordered stretches follow at residues M1–A47 and E160–K230. The span at P8–A47 shows a compositional bias: basic and acidic residues. Residues D44–P367 enclose the MRG domain. Over residues S183–A193 the composition is skewed to low complexity. The segment covering A206 to H216 has biased composition (basic residues).

The protein localises to the nucleus. Its function is as follows. Probable non-catalytic component of the MSL histone acetyltransferase complex, a multiprotein complex that mediates the majority of histone H4 acetylation at 'Lys-16' (H4K16ac), an epigenetic mark that prevents chromatin compaction. The chain is MSL complex subunit 3B from Mus musculus (Mouse).